We begin with the raw amino-acid sequence, 274 residues long: METNWRLLDTGHRPGPENMAIDEAIAMAHGRGEVPPTLRFYGWNPPAVSIGYFQSMLGEVDLDAVRAGGYGYVRRPTGGRLIFHHMELTYSVVIREELLPGGVIETYREISRGLLAGMAELGVPAALSGGDRDPRRADPDGFHTACFDTASAYELQVGGRKVAGSAQTRRDGVILQHGSILLDIDVPLLFRLMRLPEGIPAERLMARFRAKSTTLAEALGRPVSWAEARDAFAAGFARALGLTLTPGQLTEREEKEAQTLVEAKYGCDNWNMRK.

A BPL/LPL catalytic domain is found at 32 to 244; it reads GEVPPTLRFY…GFARALGLTL (213 aa). The Acyl-thioester intermediate role is filled by C146.

It belongs to the octanoyltransferase LipM family. Monomer.

The enzyme catalyses octanoyl-[ACP] + L-lysyl-[protein] = N(6)-octanoyl-L-lysyl-[protein] + holo-[ACP] + H(+). Its pathway is protein modification; protein lipoylation via endogenous pathway; protein N(6)-(lipoyl)lysine from octanoyl-[acyl-carrier-protein]. In terms of biological role, catalyzes the transfer of endogenously produced octanoic acid from octanoyl-acyl-carrier-protein onto the lipoyl domain of GcvH, an intermediate carrier during protein lipoylation. The chain is Octanoyltransferase LipM from Symbiobacterium thermophilum (strain DSM 24528 / JCM 14929 / IAM 14863 / T).